The sequence spans 520 residues: MAACTAAQQLLLVLSALGLLAAGAPQPPNIVLLLMDDMGWGDLGVNGEPSRETPNLDRMAAEGMLFPSFYSANPLCSPSRAALLTGRLPIRNGFYTTNAHARNAYTPQEIMGGIPNSEHLLPELLKKAGYTNKIVGKWHLGHRPQFHPLKHGFDEWFGSPNCHFGPYDNKAKPNIPVYRDWEMVGRFYEEFPINRKTGEANLTQLYTQEALDFIQTQHARQSPFFLYWAIDATHAPVYASRQFLGTSLRGRYGDAVREIDDSVGKILSLLQNLGISKNTFVFFTSDNGAALISAPNEGGSNGPFLCGKQTTFEGGMREPAIAWWPGHIAAGQVSHQLGSIMDLFTTSLSLAGLKPPSDRVIDGLDLLPTMLKGQMMDRPIFYYRGNTLMAVTLGQYKAHLWTWTNSWEEFTQGTDFCPGQNVSGVTTHTQEEHTELPLIFHLGRDPGERFPLSFHSDEYQDALSRTTQVVQEHQKSLVPGQPQLNVCNQAVMNWAPPGCEKLGKCLTPPESVPEKCFWAH.

Positions 1-23 (MAACTAAQQLLLVLSALGLLAAG) are cleaved as a signal peptide. Positions 24–377 (APQPPNIVLL…PTMLKGQMMD (354 aa)) are catalytic domain. Positions 36, 37, and 76 each coordinate Ca(2+). The active-site Nucleophile is the Cys-76. The residue at position 76 (Cys-76) is a 3-oxoalanine (Cys). Residue His-139 is part of the active site. The N-linked (GlcNAc...) asparagine glycan is linked to Asn-201. Positions 286 and 287 each coordinate Ca(2+). Cysteines 306 and 417 form a disulfide. Asn-421 is a glycosylation site (N-linked (GlcNAc...) asparagine). 2 disulfides stabilise this stretch: Cys-487-Cys-516 and Cys-499-Cys-505.

Belongs to the sulfatase family. As to quaternary structure, homodimer. Requires Ca(2+) as cofactor. The conversion to 3-oxoalanine (also known as C-formylglycine, FGly), of a serine or cysteine residue in prokaryotes and of a cysteine residue in eukaryotes, is critical for catalytic activity. Widely expressed. Higher expression in liver and kidney.

It localises to the lysosome. The enzyme catalyses Hydrolysis of the 6-sulfate groups of the N-acetyl-D-galactosamine 6-sulfate units of chondroitin sulfate and of the D-galactose 6-sulfate units of keratan sulfate.. This Mus musculus (Mouse) protein is N-acetylgalactosamine-6-sulfatase (Galns).